Reading from the N-terminus, the 674-residue chain is Probable L-type lectin-domain containing receptor kinase II.1 (674 aa).

An N-terminal signal peptide occupies residues 1 to 24 (MAGVLGSVVFWLIIGIHVTFLVFA). Residues 25-301 (QEGDHFVYYD…PSPKRFPLKE (277 aa)) lie on the Extracellular side of the membrane. A legume-lectin like region spans residues 28 to 274 (DHFVYYDFRN…NQYILGWSFK (247 aa)). N-linked (GlcNAc...) asparagine glycans are attached at residues N57, N117, N133, N185, N210, and N242. A helical membrane pass occupies residues 302–322 (VLGATISTIAFLTLGGIVYLY). Residues 323-674 (KKKKYAEVLE…EDVTVLFGGR (352 aa)) lie on the Cytoplasmic side of the membrane. One can recognise a Protein kinase domain in the interval 355–633 (FRENQLLGAG…LEGNVSVPAI (279 aa)). Residues 361 to 369 (LGAGGFGKV) and K383 contribute to the ATP site. Residue D480 is the Proton acceptor of the active site.

It in the C-terminal section; belongs to the protein kinase superfamily. Ser/Thr protein kinase family. In the N-terminal section; belongs to the leguminous lectin family.

The protein localises to the cell membrane. The catalysed reaction is L-seryl-[protein] + ATP = O-phospho-L-seryl-[protein] + ADP + H(+). It catalyses the reaction L-threonyl-[protein] + ATP = O-phospho-L-threonyl-[protein] + ADP + H(+). This is Probable L-type lectin-domain containing receptor kinase II.1 (LECRK21) from Arabidopsis thaliana (Mouse-ear cress).